Reading from the N-terminus, the 411-residue chain is Common plant regulatory factor 1 (411 aa).

Basic and acidic residues predominate over residues 1–14; that stretch reads MGNTDDVKAVKPEK. Disordered stretches follow at residues 1 to 30, 130 to 197, and 232 to 293; these read MGNTDDVKAVKPEKLSSPPPPAAPDQSNSH, AMSI…SSVI, and SSLE…KQAE. A compositionally biased stretch (polar residues) spans 148–164; it reads TLSQSKETEGSSDGSNE. Residues 235 to 244 show a composition bias toward basic and acidic residues; sequence ELKDSPKEHA. Over residues 249–259 the composition is skewed to polar residues; the sequence is AGGQQPSTMMP. A compositionally biased stretch (basic and acidic residues) spans 264–293; it reads LHNDRDLKRERRKQSNRESARRSRLRKQAE. The bZIP domain maps to 269–332; that stretch reads DLKRERRKQS…EKLTNDNSRL (64 aa). The basic motif stretch occupies residues 271 to 290; that stretch reads KRERRKQSNRESARRSRLRK. The tract at residues 297 to 332 is leucine-zipper; that stretch reads LAIKVDSLTAENMALKAEINRLTLTAEKLTNDNSRL. Positions 346–411 are disordered; the sequence is DVGLGNNNEK…NPRTDAVAAG (66 aa).

Belongs to the bZIP family. As to quaternary structure, binds DNA as a dimer.

The protein localises to the nucleus. In terms of biological role, binds to the G-box-like motif (5'-ACGTGGC-3') of the chalcone synthase (CHS) gene promoter. G-box and G-box-like motifs are defined in promoters of certain plant genes which are regulated by such diverse stimuli as light-induction or hormone control. The polypeptide is Common plant regulatory factor 1 (CPRF1) (Petroselinum crispum (Parsley)).